A 99-amino-acid chain; its full sequence is Putative pterin-4-alpha-carbinolamine dehydratase (99 aa).

This sequence belongs to the pterin-4-alpha-carbinolamine dehydratase family.

It carries out the reaction (4aS,6R)-4a-hydroxy-L-erythro-5,6,7,8-tetrahydrobiopterin = (6R)-L-erythro-6,7-dihydrobiopterin + H2O. The polypeptide is Putative pterin-4-alpha-carbinolamine dehydratase (Saccharolobus islandicus (strain M.16.27) (Sulfolobus islandicus)).